We begin with the raw amino-acid sequence, 1553 residues long: DNA topoisomerase 2-alpha (1553 aa).

The segment at 1-25 is disordered; that stretch reads MELLDSPAPLRPLHDNPRLPKADGA. The segment covering 12–25 has biased composition (basic and acidic residues); that stretch reads PLHDNPRLPKADGA. Residues asparagine 92, asparagine 121, 149-151, and 162-169 each bind ATP; these read SSN and GRNGYGAK. Residues 343–345 are interaction with DNA; the sequence is KKK. Residue 377–379 participates in ATP binding; the sequence is QTK. One can recognise a Toprim domain in the interval 456 to 573; the sequence is CTLILTEGDS…SLLRHNFLEE (118 aa). Residues glutamate 462, aspartate 542, and aspartate 544 each coordinate Mg(2+). One can recognise a Topo IIA-type catalytic domain in the interval 716–1163; sequence IPSLVDGLKP…SPSDLWKEDL (448 aa). Tyrosine 806 serves as the catalytic O-(5'-phospho-DNA)-tyrosine intermediate. The segment at 991–1000 is interaction with DNA; that stretch reads KLQTNLTCNS. Disordered stretches follow at residues 1095-1114 and 1186-1553; these read QNKEEEEGDESGEESAAATG and TGKP…DDMF. The segment covering 1098-1107 has biased composition (acidic residues); sequence EEEEGDESGE. A compositionally biased stretch (basic and acidic residues) spans 1242 to 1262; the sequence is SEKNESDEKQEGNSSGDKEPS. 2 stretches are compositionally biased toward acidic residues: residues 1300 to 1310 and 1334 to 1349; these read SESDSESDDFE and SDADLTSSDEDSEYQE. Over residues 1371-1385 the composition is skewed to basic and acidic residues; that stretch reads VPKEKKGKAPKEKPL. A compositionally biased stretch (low complexity) spans 1413 to 1432; that stretch reads PRAQAVPKKPAAAKKGSTAK. Residues 1444–1454 are compositionally biased toward basic residues; it reads KKKAAPKAPRR. Over residues 1517–1532 the composition is skewed to low complexity; it reads SIDLTADSPAAAAPRT.

The protein belongs to the type II topoisomerase family. As to quaternary structure, homodimer. Requires Mg(2+) as cofactor. Mn(2+) serves as cofactor. Ca(2+) is required as a cofactor.

It localises to the cytoplasm. It is found in the nucleus. The protein resides in the nucleoplasm. The protein localises to the nucleolus. It catalyses the reaction ATP-dependent breakage, passage and rejoining of double-stranded DNA.. Functionally, key decatenating enzyme that alters DNA topology by binding to two double-stranded DNA molecules, generating a double-stranded break in one of the strands, passing the intact strand through the broken strand, and religating the broken strand. May play a role in the regulation of circadian rhythm. The chain is DNA topoisomerase 2-alpha (TOP2A) from Gallus gallus (Chicken).